The following is a 129-amino-acid chain: Small ribosomal subunit protein uS11 (129 aa).

It belongs to the universal ribosomal protein uS11 family. In terms of assembly, part of the 30S ribosomal subunit. Interacts with proteins S7 and S18. Binds to IF-3.

Functionally, located on the platform of the 30S subunit, it bridges several disparate RNA helices of the 16S rRNA. Forms part of the Shine-Dalgarno cleft in the 70S ribosome. The chain is Small ribosomal subunit protein uS11 from Hamiltonella defensa subsp. Acyrthosiphon pisum (strain 5AT).